The following is a 464-amino-acid chain: Glutamate--tRNA ligase (464 aa).

The short motif at 9–19 (PSPTGYLHIGG) is the 'HIGH' region element. The short motif at 242-246 (KISKR) is the 'KMSKS' region element. An ATP-binding site is contributed by Lys-245.

Belongs to the class-I aminoacyl-tRNA synthetase family. Glutamate--tRNA ligase type 1 subfamily. As to quaternary structure, monomer.

It is found in the cytoplasm. It carries out the reaction tRNA(Glu) + L-glutamate + ATP = L-glutamyl-tRNA(Glu) + AMP + diphosphate. Its function is as follows. Catalyzes the attachment of glutamate to tRNA(Glu) in a two-step reaction: glutamate is first activated by ATP to form Glu-AMP and then transferred to the acceptor end of tRNA(Glu). The protein is Glutamate--tRNA ligase of Neisseria gonorrhoeae (strain NCCP11945).